The primary structure comprises 197 residues: Crossover junction endodeoxyribonuclease RuvC (197 aa).

Residues Asp7, Glu68, and Asp141 contribute to the active site. Residues Asp7, Glu68, and Asp141 each contribute to the Mg(2+) site. Low complexity-rich tracts occupy residues 165–181 (AAPAAPVSRPAPATPAR) and 188–197 (APARRPAGAS). The interval 165 to 197 (AAPAAPVSRPAPATPARRSPRPAAPARRPAGAS) is disordered.

It belongs to the RuvC family. As to quaternary structure, homodimer which binds Holliday junction (HJ) DNA. The HJ becomes 2-fold symmetrical on binding to RuvC with unstacked arms; it has a different conformation from HJ DNA in complex with RuvA. In the full resolvosome a probable DNA-RuvA(4)-RuvB(12)-RuvC(2) complex forms which resolves the HJ. Mg(2+) serves as cofactor.

Its subcellular location is the cytoplasm. It catalyses the reaction Endonucleolytic cleavage at a junction such as a reciprocal single-stranded crossover between two homologous DNA duplexes (Holliday junction).. In terms of biological role, the RuvA-RuvB-RuvC complex processes Holliday junction (HJ) DNA during genetic recombination and DNA repair. Endonuclease that resolves HJ intermediates. Cleaves cruciform DNA by making single-stranded nicks across the HJ at symmetrical positions within the homologous arms, yielding a 5'-phosphate and a 3'-hydroxyl group; requires a central core of homology in the junction. The consensus cleavage sequence is 5'-(A/T)TT(C/G)-3'. Cleavage occurs on the 3'-side of the TT dinucleotide at the point of strand exchange. HJ branch migration catalyzed by RuvA-RuvB allows RuvC to scan DNA until it finds its consensus sequence, where it cleaves and resolves the cruciform DNA. This is Crossover junction endodeoxyribonuclease RuvC from Frankia alni (strain DSM 45986 / CECT 9034 / ACN14a).